The following is a 1335-amino-acid chain: MPHPPGSDVLVFFVNGRKVTERDVDPEVTLLTYLRRNLGLTGTKSACGGGSCGTCTVMLSRFDLASRKPRHIAVTACLVPLCSLHGAAVTTVEGVGSIRTRVHPVQERIAKSHGTQCGFCTPGMVMSLYALLRSHPQPSEEQLLEALAGNLCRCTGYRPILESGRTFCLDSASCGQHGARQCCLDQPGDGTCPPGRNGPQAHMCSELIPRTEFQPWDPTQEPIFPPELMRMAESPVQPSLTFRGDRVTWVSPGSLQELLALRARHPEAPLVLGNTALGPAQRSQGRVHPLLISPARIPELSTVTETSDGLTIGASCSLAQLQDILAKSISQLPVEKTQTLRALAKALRSVAGLQVRNLASLGGHVMSLHSYSDLNPILAVGQAALHLRSEGGARLISLDEHFLAGVVSASLQPGEILESVHIPHSQKWEFVFSFRQAQAPQNASPHVSAGMRVRFTEGTDTIEDLSIAYGGVGTTTVMAPQACQRLLGRHWTEETLDEACRLVLGEVTIPGAAPGGRVEFRRTLLVSFLFRFYLQVLQELKAHRFLKPPCTPRTLSDTWKYPQLPDQTLGALEDVPIMVPRGVQMYERVDPQQPPQDPVGRSIMHLSGLKHATGEAVFCDDLPRVDKELFMALVTSTRPHAKIVSVDPAEALRLPGVVAIVTAEDIPGTNGTEDDKLLAVDKVLCVGQVICAVVAETDVQARQATGSVRVTYEDLEPVVLSIQDAIGHSSFLCPEKKLELGNTEEAFEDVDHILEGEVHVGGQEHFYMETQRVLVIPKVEDQELDIYASTQDPAHMQKTVSSTLNVPLNRVTCHVKRVGGGFGGKQGRSAMLGAIAAVGAIKTGRPVRLVLDRDEDMLITGGRHPLFGKYKVGFMDSGRIKALDIQCYINGGCVLDYSELVIEFLILKLENAYKIRNLRFRGRACRTNLPSNTAFRGFGFPQGALVIESCITAVAAKCGLLPEKVREKNMYRTVDKTIYKQAFSPEPLHRCWAECLEQADVPGRRALADAFNRQSPWRKRGIAVVPMKFSVGFAATSYHQAAALVHIYTDGSVLVTHGGNELGQGIHTKMLQVASRELRVPLCRLHIQETSTATVPNTVTTAASVGADVNGRAVQNACQTLLKRLEPIMKKNPEGTWEAWVEAAFEQRISLSATGYFRGYKAFMDWEKGEGEPFPYCVFGAACSEVEIDCLTGAHRKLRTDIVMDAGCSLNPALDIGQVEGAFLQGAGLYTTEELHYSPEGALLSGGPEEYKIPTAADVPEKLNVTLLPSAQAQTGLTIYSSKGLGESGMFLGSSVFFAIQDAVAAARRDRGLAEDFTVPREDPGTCKPWSISVA.

One can recognise a 2Fe-2S ferredoxin-type domain in the interval 8–95 (DVLVFFVNGR…GAAVTTVEGV (88 aa)). Residues Cys-47, Cys-52, Cys-55, and Cys-77 each contribute to the [2Fe-2S] cluster site. Gln-116 provides a ligand contact to Mo-molybdopterin. 4 residues coordinate [2Fe-2S] cluster: Cys-117, Cys-120, Cys-152, and Cys-154. A Mo-molybdopterin-binding site is contributed by Cys-154. The 186-residue stretch at 242 to 427 (FRGDRVTWVS…ESVHIPHSQK (186 aa)) folds into the FAD-binding PCMH-type domain. FAD contacts are provided by residues 270–277 (LVLGNTAL), Ala-351, Ser-360, His-364, Asp-373, and Leu-417. Mo-molybdopterin contacts are provided by residues 821-822 (GF), 1103-1106 (ASVG), Gln-1218, and Leu-1285. The Proton acceptor; for azaheterocycle hydroxylase activity role is filled by Glu-1287.

This sequence belongs to the xanthine dehydrogenase family. Homodimer. [2Fe-2S] cluster is required as a cofactor. FAD serves as cofactor. It depends on Mo-molybdopterin as a cofactor. As to expression, detected in kidney, Harderian gland and olfactory mucosa.

It is found in the cytoplasm. It carries out the reaction an aldehyde + O2 + H2O = a carboxylate + H2O2 + H(+). In terms of biological role, oxidase with broad substrate specificity, oxidizing aromatic azaheterocycles, such as phthalazine, as well as aldehydes, such as benzaldehyde and retinal. This Cavia porcellus (Guinea pig) protein is Aldehyde oxidase 2 (AOX2).